We begin with the raw amino-acid sequence, 302 residues long: Sulfate adenylyltransferase subunit 2 (302 aa).

Belongs to the PAPS reductase family. CysD subfamily. As to quaternary structure, heterodimer composed of CysD, the smaller subunit, and CysN.

It catalyses the reaction sulfate + ATP + H(+) = adenosine 5'-phosphosulfate + diphosphate. The protein operates within sulfur metabolism; hydrogen sulfide biosynthesis; sulfite from sulfate: step 1/3. With CysN forms the ATP sulfurylase (ATPS) that catalyzes the adenylation of sulfate producing adenosine 5'-phosphosulfate (APS) and diphosphate, the first enzymatic step in sulfur assimilation pathway. APS synthesis involves the formation of a high-energy phosphoric-sulfuric acid anhydride bond driven by GTP hydrolysis by CysN coupled to ATP hydrolysis by CysD. The polypeptide is Sulfate adenylyltransferase subunit 2 (Baumannia cicadellinicola subsp. Homalodisca coagulata).